A 556-amino-acid chain; its full sequence is Formate--tetrahydrofolate ligase (556 aa).

65 to 72 provides a ligand contact to ATP; that stretch reads TPAGEGKS.

It belongs to the formate--tetrahydrofolate ligase family.

It carries out the reaction (6S)-5,6,7,8-tetrahydrofolate + formate + ATP = (6R)-10-formyltetrahydrofolate + ADP + phosphate. It functions in the pathway one-carbon metabolism; tetrahydrofolate interconversion. The sequence is that of Formate--tetrahydrofolate ligase from Streptococcus equi subsp. zooepidemicus (strain MGCS10565).